A 64-amino-acid chain; its full sequence is Large ribosomal subunit protein bL33 (64 aa).

The protein belongs to the bacterial ribosomal protein bL33 family.

The polypeptide is Large ribosomal subunit protein bL33 (Thermosynechococcus vestitus (strain NIES-2133 / IAM M-273 / BP-1)).